The following is a 193-amino-acid chain: Probable nicotinate-nucleotide adenylyltransferase (193 aa).

Belongs to the NadD family.

It carries out the reaction nicotinate beta-D-ribonucleotide + ATP + H(+) = deamido-NAD(+) + diphosphate. It functions in the pathway cofactor biosynthesis; NAD(+) biosynthesis; deamido-NAD(+) from nicotinate D-ribonucleotide: step 1/1. Functionally, catalyzes the reversible adenylation of nicotinate mononucleotide (NaMN) to nicotinic acid adenine dinucleotide (NaAD). This chain is Probable nicotinate-nucleotide adenylyltransferase, found in Borreliella afzelii (strain PKo) (Borrelia afzelii).